Consider the following 648-residue polypeptide: Chaperone protein HtpG (648 aa).

An a; substrate-binding region spans residues 1–353 (MNARVEQLEF…AQDMSLNVSR (353 aa)). A b region spans residues 354–567 (EILQQDRQIK…TFGITPALAR (214 aa)). Residues 568-648 (IYRATGQDVP…LLADRLTRTL (81 aa)) are c.

The protein belongs to the heat shock protein 90 family. Homodimer.

The protein resides in the cytoplasm. Its function is as follows. Molecular chaperone. Has ATPase activity. The chain is Chaperone protein HtpG from Mycobacterium ulcerans (strain Agy99).